The chain runs to 160 residues: Cyclic pyranopterin monophosphate synthase (160 aa).

Substrate is bound by residues 77-79 (LCH) and 115-116 (ME). The active site involves aspartate 130.

This sequence belongs to the MoaC family. Homohexamer; trimer of dimers.

It catalyses the reaction (8S)-3',8-cyclo-7,8-dihydroguanosine 5'-triphosphate = cyclic pyranopterin phosphate + diphosphate. It participates in cofactor biosynthesis; molybdopterin biosynthesis. Functionally, catalyzes the conversion of (8S)-3',8-cyclo-7,8-dihydroguanosine 5'-triphosphate to cyclic pyranopterin monophosphate (cPMP). The chain is Cyclic pyranopterin monophosphate synthase from Parvibaculum lavamentivorans (strain DS-1 / DSM 13023 / NCIMB 13966).